Here is a 214-residue protein sequence, read N- to C-terminus: A-type ATP synthase subunit D (214 aa).

This sequence belongs to the V-ATPase D subunit family. In terms of assembly, has multiple subunits with at least A(3), B(3), C, D, E, F, H, I and proteolipid K(x).

Its subcellular location is the cell membrane. Its function is as follows. Component of the A-type ATP synthase that produces ATP from ADP in the presence of a proton gradient across the membrane. The sequence is that of A-type ATP synthase subunit D from Thermococcus sibiricus (strain DSM 12597 / MM 739).